Here is a 235-residue protein sequence, read N- to C-terminus: Serine protease SplA (235 aa).

Positions 1–35 (MNKNVMIKGLTALTILTSLGFAENISDQPHSIAKA) are cleaved as a signal peptide. Residues histidine 74, aspartate 113, and serine 189 each act as charge relay system in the active site.

Belongs to the peptidase S1B family.

The protein resides in the secreted. The polypeptide is Serine protease SplA (splA) (Staphylococcus aureus).